A 207-amino-acid chain; its full sequence is Killer cell lectin-like receptor subfamily F member 2 (207 aa).

The Cytoplasmic segment spans residues 1 to 30 (MENEDGYMTLSFKNRCKSKQKSKDFSLYPQ). Residue Tyr-7 is modified to Phosphotyrosine. The chain crosses the membrane as a helical; Signal-anchor for type II membrane protein span at residues 31 to 51 (YYCLLLIFGCIVILIFIMTGI). Topologically, residues 52–207 (DLKFWHKKMD…ILTHNGTSGV (156 aa)) are extracellular. Asn-67 carries an N-linked (GlcNAc...) asparagine glycan. Disulfide bonds link Cys-78/Cys-89, Cys-106/Cys-193, and Cys-172/Cys-185. A C-type lectin domain is found at 85 to 194 (NEGKCYWFST…CSSTFKGICQ (110 aa)). Residue Asn-202 is glycosylated (N-linked (GlcNAc...) asparagine).

As to quaternary structure, homodimer; non-disulfide-linked. Interacts with CLEC2A. In terms of processing, N-glycosylated.

It is found in the cell membrane. In terms of biological role, C-type lectin-like receptor involved in natural killer cell mediated cytotoxicity and cytokine secretion in keratinocytes via its interaction with CLEC2A. Triggers degranulation in a SYK-dependent manner and stimulates SYK phosphotyrosinylation without recruiting SYK directly. The protein is Killer cell lectin-like receptor subfamily F member 2 (KLRF2) of Homo sapiens (Human).